A 425-amino-acid chain; its full sequence is Gamma-glutamyl phosphate reductase (425 aa).

The protein belongs to the gamma-glutamyl phosphate reductase family.

The protein localises to the cytoplasm. It carries out the reaction L-glutamate 5-semialdehyde + phosphate + NADP(+) = L-glutamyl 5-phosphate + NADPH + H(+). The protein operates within amino-acid biosynthesis; L-proline biosynthesis; L-glutamate 5-semialdehyde from L-glutamate: step 2/2. Functionally, catalyzes the NADPH-dependent reduction of L-glutamate 5-phosphate into L-glutamate 5-semialdehyde and phosphate. The product spontaneously undergoes cyclization to form 1-pyrroline-5-carboxylate. This Xylella fastidiosa (strain M23) protein is Gamma-glutamyl phosphate reductase.